A 321-amino-acid chain; its full sequence is Urease accessory protein UreD (321 aa).

Belongs to the UreD family. As to quaternary structure, ureD, UreF and UreG form a complex that acts as a GTP-hydrolysis-dependent molecular chaperone, activating the urease apoprotein by helping to assemble the nickel containing metallocenter of UreC. The UreE protein probably delivers the nickel.

It localises to the cytoplasm. Required for maturation of urease via the functional incorporation of the urease nickel metallocenter. The chain is Urease accessory protein UreD from Photorhabdus laumondii subsp. laumondii (strain DSM 15139 / CIP 105565 / TT01) (Photorhabdus luminescens subsp. laumondii).